The primary structure comprises 513 residues: Putative thymidine phosphorylase (513 aa).

This sequence belongs to the thymidine/pyrimidine-nucleoside phosphorylase family. Type 2 subfamily.

It catalyses the reaction thymidine + phosphate = 2-deoxy-alpha-D-ribose 1-phosphate + thymine. This Bradyrhizobium diazoefficiens (strain JCM 10833 / BCRC 13528 / IAM 13628 / NBRC 14792 / USDA 110) protein is Putative thymidine phosphorylase.